The chain runs to 954 residues: Centrosomal protein of 112 kDa (954 aa).

Residues 276–954 (QKHDAEVQKI…EELTTYQSRR (679 aa)) are a coiled coil.

Its subcellular location is the cytoplasm. It is found in the cytoskeleton. The protein resides in the microtubule organizing center. It localises to the centrosome. This is Centrosomal protein of 112 kDa (Cep112) from Mus musculus (Mouse).